The following is a 351-amino-acid chain: Holliday junction branch migration complex subunit RuvB (351 aa).

Positions M1–D12 are enriched in acidic residues. A disordered region spans residues M1–E23. The large ATPase domain (RuvB-L) stretch occupies residues M1 to Y191. Residues L30, R31, G72, K75, T76, S77, E138–F140, R181, Y191, and R228 each bind ATP. Residue T76 participates in Mg(2+) binding. Residues E192–D262 are small ATPAse domain (RuvB-S). Residues E265 to D351 are head domain (RuvB-H). The DNA site is built by R320 and R325.

It belongs to the RuvB family. As to quaternary structure, homohexamer. Forms an RuvA(8)-RuvB(12)-Holliday junction (HJ) complex. HJ DNA is sandwiched between 2 RuvA tetramers; dsDNA enters through RuvA and exits via RuvB. An RuvB hexamer assembles on each DNA strand where it exits the tetramer. Each RuvB hexamer is contacted by two RuvA subunits (via domain III) on 2 adjacent RuvB subunits; this complex drives branch migration. In the full resolvosome a probable DNA-RuvA(4)-RuvB(12)-RuvC(2) complex forms which resolves the HJ.

The protein resides in the cytoplasm. The catalysed reaction is ATP + H2O = ADP + phosphate + H(+). The RuvA-RuvB-RuvC complex processes Holliday junction (HJ) DNA during genetic recombination and DNA repair, while the RuvA-RuvB complex plays an important role in the rescue of blocked DNA replication forks via replication fork reversal (RFR). RuvA specifically binds to HJ cruciform DNA, conferring on it an open structure. The RuvB hexamer acts as an ATP-dependent pump, pulling dsDNA into and through the RuvAB complex. RuvB forms 2 homohexamers on either side of HJ DNA bound by 1 or 2 RuvA tetramers; 4 subunits per hexamer contact DNA at a time. Coordinated motions by a converter formed by DNA-disengaged RuvB subunits stimulates ATP hydrolysis and nucleotide exchange. Immobilization of the converter enables RuvB to convert the ATP-contained energy into a lever motion, pulling 2 nucleotides of DNA out of the RuvA tetramer per ATP hydrolyzed, thus driving DNA branch migration. The RuvB motors rotate together with the DNA substrate, which together with the progressing nucleotide cycle form the mechanistic basis for DNA recombination by continuous HJ branch migration. Branch migration allows RuvC to scan DNA until it finds its consensus sequence, where it cleaves and resolves cruciform DNA. The polypeptide is Holliday junction branch migration complex subunit RuvB (Mycolicibacterium smegmatis (strain ATCC 700084 / mc(2)155) (Mycobacterium smegmatis)).